The following is a 75-amino-acid chain: Brevinin-2SN2 (75 aa).

An N-terminal signal peptide occupies residues 1 to 22; sequence MFTLKKPLLFLFFLGTISLSFC. A propeptide spans 23 to 40 (removed in mature form); it reads EEERGADEDDGGEMTEEE. A disulfide bond links C69 and C75.

The protein belongs to the frog skin active peptide (FSAP) family. Brevinin subfamily. In terms of tissue distribution, expressed by the skin glands.

It is found in the secreted. Antimicrobial peptide. Active against some Gram-negative and a variety of Gram-positive bacterial strains. Active against fungus C.glabrata 090902 but not against C.albicans ATCC 10231. Shows hemolytic activity against human erythrocytes. This is Brevinin-2SN2 from Sylvirana spinulosa (Fine-spined frog).